The following is a 403-amino-acid chain: Arginine biosynthesis bifunctional protein ArgJ (403 aa).

6 residues coordinate substrate: T149, K175, T186, E272, N398, and T403. T186 (nucleophile) is an active-site residue.

Belongs to the ArgJ family. Heterotetramer of two alpha and two beta chains.

Its subcellular location is the cytoplasm. The enzyme catalyses N(2)-acetyl-L-ornithine + L-glutamate = N-acetyl-L-glutamate + L-ornithine. It catalyses the reaction L-glutamate + acetyl-CoA = N-acetyl-L-glutamate + CoA + H(+). It functions in the pathway amino-acid biosynthesis; L-arginine biosynthesis; L-ornithine and N-acetyl-L-glutamate from L-glutamate and N(2)-acetyl-L-ornithine (cyclic): step 1/1. Its pathway is amino-acid biosynthesis; L-arginine biosynthesis; N(2)-acetyl-L-ornithine from L-glutamate: step 1/4. Catalyzes two activities which are involved in the cyclic version of arginine biosynthesis: the synthesis of N-acetylglutamate from glutamate and acetyl-CoA as the acetyl donor, and of ornithine by transacetylation between N(2)-acetylornithine and glutamate. The protein is Arginine biosynthesis bifunctional protein ArgJ of Caldanaerobacter subterraneus subsp. tengcongensis (strain DSM 15242 / JCM 11007 / NBRC 100824 / MB4) (Thermoanaerobacter tengcongensis).